The primary structure comprises 84 residues: Small ribosomal subunit protein uS17 (84 aa).

The protein belongs to the universal ribosomal protein uS17 family. As to quaternary structure, part of the 30S ribosomal subunit.

Its function is as follows. One of the primary rRNA binding proteins, it binds specifically to the 5'-end of 16S ribosomal RNA. The chain is Small ribosomal subunit protein uS17 from Porphyromonas gingivalis (strain ATCC 33277 / DSM 20709 / CIP 103683 / JCM 12257 / NCTC 11834 / 2561).